A 182-amino-acid chain; its full sequence is CD-NTase-associated protein 15 (182 aa).

The next 2 membrane-spanning stretches (helical) occupy residues 11–31 (ITGWFTVIFFLLLIIVSCTVW) and 33–53 (IGWIDIISYTVTISTFITIGY).

Belongs to the CBASS Cap15 membrane effector family. The beta barrel domain oligomerizes; in the presence of cyclic nucleotides (probably 3',2'-cGAMP) higher-level oligomers occur.

The protein localises to the cell membrane. Its function is as follows. Effector protein of a CBASS antivirus system. CBASS (cyclic oligonucleotide-based antiphage signaling system) provides immunity against bacteriophage. The CD-NTase protein (CdnE) synthesizes cyclic nucleotides in response to infection; these serve as specific second messenger signals. The signals activate a diverse range of effectors, leading to bacterial cell death and thus abortive phage infection. This system triggers membrane disruption without lysis. A type I-B CBASS system. Binds cyclic nucleotide second messenger 3',2'-cGAMP, probably oligomerizing, and induces cell membrane shrinkage and rupture, leading to cell death. Functionally, protects S.aureus against phage infection. When the CBASS operon (cdnE-cap15) is introduced in S.aureus strain RN4220 there is strong protection against lytic DNA phages 80alpha-vir and phi-NM1-gamma-6 but little to no protection against phages phi-NM4-gamma-4 or phi-12-gamma-3. The polypeptide is CD-NTase-associated protein 15 (Staphylococcus schleiferi).